A 647-amino-acid chain; its full sequence is Chaperone protein DnaK (647 aa).

A Phosphothreonine; by autocatalysis modification is found at T198. The segment at 603–647 is disordered; it reads EQAQGAGGAQGFDPNAFQGGDAGQQQKADDGVVDAEFTEVKDDKK. The segment covering 618-628 has biased composition (low complexity); sequence AFQGGDAGQQQ.

This sequence belongs to the heat shock protein 70 family.

Functionally, acts as a chaperone. The protein is Chaperone protein DnaK of Acinetobacter baylyi (strain ATCC 33305 / BD413 / ADP1).